The chain runs to 418 residues: Serine/threonine-protein kinase Sgk1 (418 aa).

The tract at residues 50 to 78 is disordered; the sequence is PQEPELLNENSSPPPSPSQQINLGPSSNP. The span at 68 to 78 shows a compositional bias: polar residues; that stretch reads QQINLGPSSNP. The region spanning 85–342 is the Protein kinase domain; that stretch reads FQFLKIIGKG…FMEIKNHMFF (258 aa). ATP-binding positions include 91 to 99 and Lys-114; that span reads IGKGSFGKV. The active-site Proton acceptor is the Asp-209. Positions 343 to 418 constitute an AGC-kinase C-terminal domain; that stretch reads SPINWDDLIN…SYAPPMESYL (76 aa).

The protein belongs to the protein kinase superfamily. AGC Ser/Thr protein kinase family.

It is found in the cytoplasm. It localises to the nucleus. Its subcellular location is the endoplasmic reticulum. It carries out the reaction L-seryl-[protein] + ATP = O-phospho-L-seryl-[protein] + ADP + H(+). The enzyme catalyses L-threonyl-[protein] + ATP = O-phospho-L-threonyl-[protein] + ADP + H(+). In terms of biological role, protein kinase that may play an important role in cellular stress response. Plays an important role in activating certain potassium, sodium, and chloride channels, suggesting an involvement in the regulation of processes such as cell survival, neuronal excitability, and renal sodium excretion. This Xenopus tropicalis (Western clawed frog) protein is Serine/threonine-protein kinase Sgk1 (sgk1).